A 189-amino-acid polypeptide reads, in one-letter code: Chitin synthase 2 (189 aa).

Belongs to the chitin synthase family. Class II subfamily.

It is found in the cell membrane. The catalysed reaction is [(1-&gt;4)-N-acetyl-beta-D-glucosaminyl](n) + UDP-N-acetyl-alpha-D-glucosamine = [(1-&gt;4)-N-acetyl-beta-D-glucosaminyl](n+1) + UDP + H(+). Polymerizes chitin, a structural polymer of the cell wall and septum, by transferring the sugar moiety of UDP-GlcNAc to the non-reducing end of the growing chitin polymer. The sequence is that of Chitin synthase 2 (CHS2) from Ajellomyces dermatitidis (Blastomyces dermatitidis).